Consider the following 198-residue polypeptide: Protein GrpE (198 aa).

It belongs to the GrpE family. Homodimer.

It is found in the cytoplasm. Participates actively in the response to hyperosmotic and heat shock by preventing the aggregation of stress-denatured proteins, in association with DnaK and GrpE. It is the nucleotide exchange factor for DnaK and may function as a thermosensor. Unfolded proteins bind initially to DnaJ; upon interaction with the DnaJ-bound protein, DnaK hydrolyzes its bound ATP, resulting in the formation of a stable complex. GrpE releases ADP from DnaK; ATP binding to DnaK triggers the release of the substrate protein, thus completing the reaction cycle. Several rounds of ATP-dependent interactions between DnaJ, DnaK and GrpE are required for fully efficient folding. The chain is Protein GrpE from Actinobacillus pleuropneumoniae serotype 5b (strain L20).